The sequence spans 312 residues: Transcription initiation factor IIB (312 aa).

Residues 10 to 42 form a TFIIB-type zinc finger; it reads FVQTCSDCGETQNIVEDYKNGYHVCGRCGCIVG. Positions 14, 17, 34, and 37 each coordinate Zn(2+). Tandem repeats lie at residues 120-196 and 213-290.

The protein belongs to the TFIIB family. As to quaternary structure, associates with TFIID-IIA (DA complex) to form TFIID-IIA-IIB (DAB-complex) which is then recognized by polymerase II.

It localises to the nucleus. Its function is as follows. General factor that plays a major role in the activation of eukaryotic genes transcribed by RNA polymerase II. This Encephalitozoon cuniculi (strain GB-M1) (Microsporidian parasite) protein is Transcription initiation factor IIB.